The primary structure comprises 109 residues: Mitochondrial import inner membrane translocase subunit TIM12 (109 aa).

An N-acetylserine modification is found at serine 2. A Twin CX3C motif motif is present at residues cysteine 40 to cysteine 66. Intrachain disulfides connect cysteine 40/cysteine 66 and cysteine 44/cysteine 62.

This sequence belongs to the small Tim family. Component of the TIM22 complex, whose core is composed of TIM18, TIM22 and TIM54, associated with the peripheral proteins MRS5/TIM12 and the 70 kDa heterohexamer composed of TIM9 and TIM10 (or TIM8 and TIM13). Interacts directly with both the TIM22 protein and the TIM9-TIM10 heterohexamer. Interacts with multi-pass transmembrane proteins in transit.

Its subcellular location is the mitochondrion inner membrane. It is found in the mitochondrion intermembrane space. Essential component of the TIM22 complex, a complex that mediates the import and insertion of multi-pass transmembrane proteins into the mitochondrial inner membrane. The TIM22 complex forms a twin-pore translocase that uses the membrane potential as external driving force. In the TIM22 complex, it acts as a docking point for the soluble TIM9-TIM10 heterohexamer that guides the target proteins in transit through the aqueous mitochondrial intermembrane space. This Saccharomyces cerevisiae (strain ATCC 204508 / S288c) (Baker's yeast) protein is Mitochondrial import inner membrane translocase subunit TIM12 (TIM12).